We begin with the raw amino-acid sequence, 308 residues long: Elongation factor Ts (308 aa).

Positions 80–83 (TDFV) are involved in Mg(2+) ion dislocation from EF-Tu.

The protein belongs to the EF-Ts family.

It localises to the cytoplasm. Associates with the EF-Tu.GDP complex and induces the exchange of GDP to GTP. It remains bound to the aminoacyl-tRNA.EF-Tu.GTP complex up to the GTP hydrolysis stage on the ribosome. The sequence is that of Elongation factor Ts from Rhodopseudomonas palustris (strain BisB18).